Consider the following 500-residue polypeptide: Palmitoleoyl-protein carboxylesterase notum1a (500 aa).

The signal sequence occupies residues 1-26 (MKRSLWVMQVLHWAVMLALVQCGALG). N-linked (GlcNAc...) asparagine glycosylation is present at N101. Active-site charge relay system residues include S237, D344, and H393.

It belongs to the pectinacetylesterase family. Notum subfamily.

It is found in the secreted. It catalyses the reaction [Wnt protein]-O-(9Z)-hexadecenoyl-L-serine + H2O = [Wnt protein]-L-serine + (9Z)-hexadecenoate + H(+). Carboxylesterase that acts as a key negative regulator of the Wnt signaling pathway. Acts by specifically mediating depalmitoleoylation of WNT proteins. Serine palmitoleoylation of WNT proteins is required for efficient binding to frizzled receptors. The protein is Palmitoleoyl-protein carboxylesterase notum1a of Danio rerio (Zebrafish).